A 421-amino-acid polypeptide reads, in one-letter code: D-amino-acid oxidase (421 aa).

FAD contacts are provided by Ala-12, Gly-13, Ala-14, Val-15, Gly-47, Gly-64, Ile-65, Lys-225, Ala-226, Arg-359, Gly-385, Gly-388, and Leu-389. Position 359 (Arg-359) interacts with D-proline. Arg-359 lines the D-serine pocket.

Belongs to the DAMOX/DASOX family. FAD serves as cofactor.

It localises to the cytoplasm. The protein localises to the secreted. It is found in the cell wall. It catalyses the reaction a D-alpha-amino acid + O2 + H2O = a 2-oxocarboxylate + H2O2 + NH4(+). Catalyzes the oxidative deamination of D-amino acids with broad substrate specificity. This chain is D-amino-acid oxidase, found in Bradyrhizobium diazoefficiens (strain JCM 10833 / BCRC 13528 / IAM 13628 / NBRC 14792 / USDA 110).